Reading from the N-terminus, the 262-residue chain is Acyl-[acyl-carrier-protein]--UDP-N-acetylglucosamine O-acyltransferase (262 aa).

It belongs to the transferase hexapeptide repeat family. LpxA subfamily. Homotrimer.

Its subcellular location is the cytoplasm. It catalyses the reaction a (3R)-hydroxyacyl-[ACP] + UDP-N-acetyl-alpha-D-glucosamine = a UDP-3-O-[(3R)-3-hydroxyacyl]-N-acetyl-alpha-D-glucosamine + holo-[ACP]. It participates in glycolipid biosynthesis; lipid IV(A) biosynthesis; lipid IV(A) from (3R)-3-hydroxytetradecanoyl-[acyl-carrier-protein] and UDP-N-acetyl-alpha-D-glucosamine: step 1/6. Functionally, involved in the biosynthesis of lipid A, a phosphorylated glycolipid that anchors the lipopolysaccharide to the outer membrane of the cell. The protein is Acyl-[acyl-carrier-protein]--UDP-N-acetylglucosamine O-acyltransferase of Aliivibrio fischeri (strain ATCC 700601 / ES114) (Vibrio fischeri).